A 284-amino-acid polypeptide reads, in one-letter code: Diaminopimelate epimerase (284 aa).

Substrate-binding residues include N14 and N67. C76 acts as the Proton donor in catalysis. Substrate is bound by residues 77 to 78 (GN), N166, N199, and 217 to 218 (ER). C226 serves as the catalytic Proton acceptor. 227–228 (GT) provides a ligand contact to substrate.

It belongs to the diaminopimelate epimerase family. In terms of assembly, homodimer.

Its subcellular location is the cytoplasm. It catalyses the reaction (2S,6S)-2,6-diaminopimelate = meso-2,6-diaminopimelate. It functions in the pathway amino-acid biosynthesis; L-lysine biosynthesis via DAP pathway; DL-2,6-diaminopimelate from LL-2,6-diaminopimelate: step 1/1. Catalyzes the stereoinversion of LL-2,6-diaminopimelate (L,L-DAP) to meso-diaminopimelate (meso-DAP), a precursor of L-lysine and an essential component of the bacterial peptidoglycan. The chain is Diaminopimelate epimerase from Bacillus pumilus (strain SAFR-032).